The primary structure comprises 385 residues: DNA replication and repair protein RecF (385 aa).

ATP is bound at residue 30–37 (GRNGQGKT).

This sequence belongs to the RecF family.

The protein localises to the cytoplasm. The RecF protein is involved in DNA metabolism; it is required for DNA replication and normal SOS inducibility. RecF binds preferentially to single-stranded, linear DNA. It also seems to bind ATP. This Leifsonia xyli subsp. xyli (strain CTCB07) protein is DNA replication and repair protein RecF.